The sequence spans 61 residues: Small ribosomal subunit protein uS14 (61 aa).

Residues Cys24, Cys27, Cys40, and Cys43 each contribute to the Zn(2+) site.

This sequence belongs to the universal ribosomal protein uS14 family. Zinc-binding uS14 subfamily. Part of the 30S ribosomal subunit. Contacts proteins S3 and S10. Zn(2+) is required as a cofactor.

In terms of biological role, binds 16S rRNA, required for the assembly of 30S particles and may also be responsible for determining the conformation of the 16S rRNA at the A site. The polypeptide is Small ribosomal subunit protein uS14 (Anaeromyxobacter sp. (strain Fw109-5)).